Reading from the N-terminus, the 1074-residue chain is Telomerase reverse transcriptase (1074 aa).

Residues 240–265 are disordered; that stretch reads DKVSCETMQDGESGKTTLVQKQPGSK. Over residues 253-262 the composition is skewed to polar residues; the sequence is GKTTLVQKQP. Residues 300–305 carry the TFLY; involved in RNA binding motif; the sequence is TLGFLY. Interaction with RNA template regions lie at residues 355–360 and 461–486; these read LPRRFF and WKIKVNNCDWLKISKTGRVPPSELSY. One can recognise a Reverse transcriptase domain in the interval 552–877; it reads TPDQVAALPK…CLFPWCGLLL (326 aa). Positions 649, 810, and 811 each coordinate Mg(2+).

It belongs to the reverse transcriptase family. Telomerase subfamily. As to quaternary structure, catalytic subunit of the telomerase holoenzyme complex composed minimally of TERT and the telomerase RNA template component (TERC). In terms of tissue distribution, detected at highest levels in gill, ovary and testis, and at lower levels in brain, eye, heart, skin, spleen and stomach.

The protein resides in the nucleus. It localises to the chromosome. The protein localises to the telomere. It carries out the reaction DNA(n) + a 2'-deoxyribonucleoside 5'-triphosphate = DNA(n+1) + diphosphate. Telomerase is a ribonucleoprotein enzyme essential for the replication of chromosome termini in most eukaryotes. It elongates telomeres. It is a reverse transcriptase that adds simple sequence repeats to chromosome ends by copying a template sequence within the RNA component of the enzyme. In Takifugu rubripes (Japanese pufferfish), this protein is Telomerase reverse transcriptase.